A 439-amino-acid chain; its full sequence is FK506-binding protein 59 (439 aa).

PPIase FKBP-type domains follow at residues glycine 32 to lysine 120 and glycine 149 to glycine 235. TPR repeat units follow at residues alanine 252–threonine 285, valine 297–asparagine 330, and valine 331–asparagine 364.

Interacts with inaD and trpl, and may be part of the inaD signaling complex. As to expression, expression in the embryo is limited to three tissues: lymph glands, Garland cells and oenocyte cells.

It carries out the reaction [protein]-peptidylproline (omega=180) = [protein]-peptidylproline (omega=0). Its function is as follows. May have a role in phototransduction; inhibits or prevents Ca(2+) induced stimulation of the trpl ion channel. This Drosophila melanogaster (Fruit fly) protein is FK506-binding protein 59.